Consider the following 192-residue polypeptide: Probable cobalt-precorrin-6B C(15)-methyltransferase (decarboxylating) (192 aa).

S-adenosyl-L-methionine-binding positions include Thr20, 44–48 (GSGTG), Glu68, and Ala96.

The protein belongs to the methyltransferase superfamily. Archaeal-type CbiT family.

It carries out the reaction Co-precorrin-6B + S-adenosyl-L-methionine = Co-precorrin-7 + S-adenosyl-L-homocysteine + CO2. It participates in cofactor biosynthesis; adenosylcobalamin biosynthesis; cob(II)yrinate a,c-diamide from sirohydrochlorin (anaerobic route): step 8/10. Catalyzes the methylation of C-15 in cobalt-precorrin-6B followed by the decarboxylation of C-12 to form cobalt-precorrin-7. This Sulfurisphaera tokodaii (strain DSM 16993 / JCM 10545 / NBRC 100140 / 7) (Sulfolobus tokodaii) protein is Probable cobalt-precorrin-6B C(15)-methyltransferase (decarboxylating).